We begin with the raw amino-acid sequence, 158 residues long: Small ribosomal subunit protein uS9 (158 aa).

Residues 1–20 (MTEAVETETVEPTTDEATAA) form a disordered region. Over residues 10 to 20 (VEPTTDEATAA) the composition is skewed to low complexity.

This sequence belongs to the universal ribosomal protein uS9 family.

The sequence is that of Small ribosomal subunit protein uS9 from Mycobacterium sp. (strain JLS).